The following is a 275-amino-acid chain: NH(3)-dependent NAD(+) synthetase (275 aa).

Gly-46 to Ser-53 is a binding site for ATP. Position 52 (Asp-52) interacts with Mg(2+). Position 140 (Arg-140) interacts with deamido-NAD(+). Position 160 (Thr-160) interacts with ATP. Glu-165 contributes to the Mg(2+) binding site. Residues Lys-173 and Asp-180 each contribute to the deamido-NAD(+) site. 2 residues coordinate ATP: Lys-189 and Thr-211. His-260 to Lys-261 provides a ligand contact to deamido-NAD(+).

It belongs to the NAD synthetase family. Homodimer.

The enzyme catalyses deamido-NAD(+) + NH4(+) + ATP = AMP + diphosphate + NAD(+) + H(+). It functions in the pathway cofactor biosynthesis; NAD(+) biosynthesis; NAD(+) from deamido-NAD(+) (ammonia route): step 1/1. Its function is as follows. Catalyzes the ATP-dependent amidation of deamido-NAD to form NAD. Uses ammonia as a nitrogen source. This chain is NH(3)-dependent NAD(+) synthetase, found in Salmonella heidelberg (strain SL476).